Consider the following 418-residue polypeptide: uncharacterized protein (418 aa).

The N-acetyltransferase domain occupies 7–158 (IDVRPIAEAE…TGLDPRWSGP (152 aa)). Residues 87-89 (VTV) and 95-100 (RRGLLT) each bind acetyl-CoA. Y128 (proton donor) is an active-site residue. Residue F418 is the Proton acceptor; via carboxylate of the active site.

The protein belongs to the acetyltransferase Eis family. Homohexamer; trimer of dimers.

This is an uncharacterized protein from Streptomyces avermitilis (strain ATCC 31267 / DSM 46492 / JCM 5070 / NBRC 14893 / NCIMB 12804 / NRRL 8165 / MA-4680).